We begin with the raw amino-acid sequence, 101 residues long: ATP-dependent Clp protease adapter protein ClpS 2 (101 aa).

The protein belongs to the ClpS family. Binds to the N-terminal domain of the chaperone ClpA.

Involved in the modulation of the specificity of the ClpAP-mediated ATP-dependent protein degradation. This Rhizobium meliloti (strain 1021) (Ensifer meliloti) protein is ATP-dependent Clp protease adapter protein ClpS 2.